The chain runs to 430 residues: Mannan endo-1,4-beta-mannosidase (430 aa).

The active-site Proton donor is the Glu173. Residue Glu269 is the Nucleophile of the active site. 2 consecutive CBM10 domains span residues 357–390 and 395–424; these read SCGT…CVVA and SCNW…CIAA.

This sequence belongs to the glycosyl hydrolase 5 (cellulase A) family.

The enzyme catalyses Random hydrolysis of (1-&gt;4)-beta-D-mannosidic linkages in mannans, galactomannans and glucomannans.. Its function is as follows. Catalyzes the endo hydrolysis of beta-1,4-linked mannan, galactomannan and glucomannan. It is able to hydrolyze mannosidic linkages that are flanked by mannose or glucose. This chain is Mannan endo-1,4-beta-mannosidase, found in Cellvibrio japonicus (strain Ueda107) (Pseudomonas fluorescens subsp. cellulosa).